The sequence spans 573 residues: Adenine deaminase (573 aa).

It belongs to the metallo-dependent hydrolases superfamily. Adenine deaminase family. The cofactor is Mn(2+).

It carries out the reaction adenine + H2O + H(+) = hypoxanthine + NH4(+). The protein is Adenine deaminase of Bacillus licheniformis (strain ATCC 14580 / DSM 13 / JCM 2505 / CCUG 7422 / NBRC 12200 / NCIMB 9375 / NCTC 10341 / NRRL NRS-1264 / Gibson 46).